The primary structure comprises 218 residues: Pyridoxine/pyridoxamine 5'-phosphate oxidase (218 aa).

Substrate-binding positions include 14 to 17 (RREY) and Lys72. Residues 67–72 (RIVLLK), 82–83 (YT), Arg88, Lys89, and Gln111 each bind FMN. 3 residues coordinate substrate: Tyr129, Arg133, and Ser137. FMN-binding positions include 146-147 (QS) and Trp191. Residue 197-199 (RLH) coordinates substrate. Arg201 is a binding site for FMN.

It belongs to the pyridoxamine 5'-phosphate oxidase family. In terms of assembly, homodimer. It depends on FMN as a cofactor.

The enzyme catalyses pyridoxamine 5'-phosphate + O2 + H2O = pyridoxal 5'-phosphate + H2O2 + NH4(+). The catalysed reaction is pyridoxine 5'-phosphate + O2 = pyridoxal 5'-phosphate + H2O2. The protein operates within cofactor metabolism; pyridoxal 5'-phosphate salvage; pyridoxal 5'-phosphate from pyridoxamine 5'-phosphate: step 1/1. It participates in cofactor metabolism; pyridoxal 5'-phosphate salvage; pyridoxal 5'-phosphate from pyridoxine 5'-phosphate: step 1/1. Its function is as follows. Catalyzes the oxidation of either pyridoxine 5'-phosphate (PNP) or pyridoxamine 5'-phosphate (PMP) into pyridoxal 5'-phosphate (PLP). This is Pyridoxine/pyridoxamine 5'-phosphate oxidase from Escherichia coli (strain 55989 / EAEC).